The primary structure comprises 404 residues: Queuine tRNA-ribosyltransferase catalytic subunit (404 aa).

The Proton acceptor role is filled by D98. Residues D98–F102, D152, Q195, and G222 each bind substrate. The interval G253–D259 is RNA binding. D272 acts as the Nucleophile in catalysis. Residues T277 to R281 are RNA binding; important for wobble base 34 recognition. The Zn(2+) site is built by C310, C312, C315, and H347.

It belongs to the queuine tRNA-ribosyltransferase family. Heterodimer of a catalytic subunit and an accessory subunit. It depends on Zn(2+) as a cofactor.

It localises to the cytoplasm. The protein localises to the nucleus. It carries out the reaction guanosine(34) in tRNA + queuine = queuosine(34) in tRNA + guanine. Functionally, catalytic subunit of the queuine tRNA-ribosyltransferase (TGT) that catalyzes the base-exchange of a guanine (G) residue with queuine (Q) at position 34 (anticodon wobble position) in tRNAs with GU(N) anticodons (tRNA-Asp, -Asn, -His and -Tyr), resulting in the hypermodified nucleoside queuosine (7-(((4,5-cis-dihydroxy-2-cyclopenten-1-yl)amino)methyl)-7-deazaguanosine). Catalysis occurs through a double-displacement mechanism. The nucleophile active site attacks the C1' of nucleotide 34 to detach the guanine base from the RNA, forming a covalent enzyme-RNA intermediate. The proton acceptor active site deprotonates the incoming queuine, allowing a nucleophilic attack on the C1' of the ribose to form the product. The protein is Queuine tRNA-ribosyltransferase catalytic subunit of Schizosaccharomyces pombe (strain 972 / ATCC 24843) (Fission yeast).